The primary structure comprises 1208 residues: Spindle pole body protein pcp1 (1208 aa).

Basic and acidic residues predominate over residues 1-17 (MSERDFNTQSPKFKDEN). The disordered stretch occupies residues 1–91 (MSERDFNTQS…DKYNGSLGDK (91 aa)). The segment covering 48-64 (NDKSSFQTPLRNGSYQP) has biased composition (polar residues). 4 coiled-coil regions span residues 151–375 (LREQ…KENQ), 387–803 (TDSM…ANIE), 874–1091 (GTET…QSTQ), and 1177–1204 (ERMK…AKAK). The residue at position 906 (serine 906) is a Phosphoserine.

As to quaternary structure, interacts with ccq1.

It localises to the nucleus. It is found in the cytoplasm. The protein localises to the cytoskeleton. The protein resides in the microtubule organizing center. Its subcellular location is the spindle pole body. Spindle pole body component that binds calmodulin. Overexpression of pcp1 causes the formation of supernumerary SPB-like structures and disrupts both mitotic spindle assembly and chromosome segregation. In Schizosaccharomyces pombe (strain 972 / ATCC 24843) (Fission yeast), this protein is Spindle pole body protein pcp1 (pcp1).